Consider the following 670-residue polypeptide: MESQASENGSQTSSGVTDDYSSWYIEEPLGAEEVQPEGVNPLCQPTVPPALHHACLASLSLLALLLLALLVRRRRLWPHCAHCRPGLPSPVDFLAGNRSWTVPTAVFVALFSNLCLLLPDENPLPFLNRTAASSPDGEPETSRGPWKLLALLYYPALYYPLAACATAGHRAAYLLGTVLSWVHVSVQVWQRAECPQDPKIYKHYSLLASLPLLLSLGFLSLWYPVQVVQSIRHRTGAGSQGLQTSYSEKYLRALLCPKKLDSCSHPASKRSLLSRAWAFSQHSIYTPEPGFCLPLKLVISATLTGTATYQVALLLLVSVVPTVQKVRAGITTDVSYLLAGFGIVLSEDRQEVVELVKHHLWAVEACYISALVLSCSLTFLLLIRSLRTHRANLKALHRGAALDLGPPLQSTHPSRQAIVCWMSFSAYQTAFSCLGLLVQQVIFFLGTTILAFLVFVPLLHGRNLLLLRSLESTWPFWLTLVLAVILQNIAANWVFLESHHGYPELTNRRMLCVATFLLFPINMLVGAIMAIWRVLLSSLYNTVHLGQMDLSLLPQRAASLDPGYHTYRNFLRIEASQSHPGVIAFCALLLHVPSPQPQPPLAPQDSLRPAAEEEGMQLLQTKDLMAKGAGPKGSRSRARWGLAYTLLHNPSLQAFRKAALTSAKANGTQP.

At 1–50 the chain is on the extracellular side; the sequence is MESQASENGSQTSSGVTDDYSSWYIEEPLGAEEVQPEGVNPLCQPTVPPA. Asparagine 8 is a glycosylation site (N-linked (GlcNAc...) asparagine). A helical transmembrane segment spans residues 51 to 71; that stretch reads LHHACLASLSLLALLLLALLV. Over 72–98 the chain is Cytoplasmic; the sequence is RRRRLWPHCAHCRPGLPSPVDFLAGNR. A helical membrane pass occupies residues 99-119; sequence SWTVPTAVFVALFSNLCLLLP. Residues 120-144 lie on the Extracellular side of the membrane; it reads DENPLPFLNRTAASSPDGEPETSRG. Residues 145-165 traverse the membrane as a helical segment; that stretch reads PWKLLALLYYPALYYPLAACA. Residues 166-168 lie on the Cytoplasmic side of the membrane; it reads TAG. Residues 169–189 form a helical membrane-spanning segment; it reads HRAAYLLGTVLSWVHVSVQVW. Residues 190–205 lie on the Extracellular side of the membrane; that stretch reads QRAECPQDPKIYKHYS. Residues 206-226 form a helical membrane-spanning segment; it reads LLASLPLLLSLGFLSLWYPVQ. Residues 227 to 296 lie on the Cytoplasmic side of the membrane; sequence VVQSIRHRTG…PEPGFCLPLK (70 aa). The tract at residues 235–294 is interaction with RBP1; that stretch reads TGAGSQGLQTSYSEKYLRALLCPKKLDSCSHPASKRSLLSRAWAFSQHSIYTPEPGFCLP. The helical transmembrane segment at 297–317 threads the bilayer; sequence LVISATLTGTATYQVALLLLV. At 318–368 the chain is on the extracellular side; that stretch reads SVVPTVQKVRAGITTDVSYLLAGFGIVLSEDRQEVVELVKHHLWAVEACYI. The helical transmembrane segment at 369–389 threads the bilayer; it reads SALVLSCSLTFLLLIRSLRTH. The Cytoplasmic portion of the chain corresponds to 390–423; that stretch reads RANLKALHRGAALDLGPPLQSTHPSRQAIVCWMS. The helical transmembrane segment at 424 to 444 threads the bilayer; it reads FSAYQTAFSCLGLLVQQVIFF. At 445–474 the chain is on the extracellular side; sequence LGTTILAFLVFVPLLHGRNLLLLRSLESTW. The helical transmembrane segment at 475–495 threads the bilayer; it reads PFWLTLVLAVILQNIAANWVF. At 496 to 510 the chain is on the cytoplasmic side; sequence LESHHGYPELTNRRM. An intramembrane region (helical) is located at residues 511 to 548; it reads LCVATFLLFPINMLVGAIMAIWRVLLSSLYNTVHLGQM. Topologically, residues 549 to 670 are cytoplasmic; sequence DLSLLPQRAA…TSAKANGTQP (122 aa). A Phosphotyrosine modification is found at tyrosine 644.

In terms of assembly, homodimer. Interacts with JAK2 and STAT5. Interacts (via extracellular domains) with RBP4. Interacts (via cytoplasmic domains) with RBP1. Phosphorylated on tyrosine residues in response to RBP4 binding. Phosphorylation requires the presence of LRAT, suggesting it may be triggered by the uptake of retinol that is then metabolized within the cell to retinoids that function as signaling molecules.

Its subcellular location is the cell membrane. In terms of biological role, functions as a retinol transporter. Accepts all-trans retinol from the extracellular retinol-binding protein RBP4, facilitates retinol transport across the cell membrane, and then transfers retinol to the cytoplasmic retinol-binding protein RBP1. Retinol uptake is enhanced by LRAT, an enzyme that converts retinol to all-trans retinyl esters, the storage forms of vitamin A. Contributes to the activation of a signaling cascade that depends on retinol transport and LRAT-dependent generation of retinol metabolites that then trigger activation of JAK2 and its target STAT5, and ultimately increase the expression of SOCS3 and inhibit cellular responses to insulin. Important for the homeostasis of vitamin A and its derivatives, such as retinoic acid. STRA6-mediated transport is particularly important in the eye, and under conditions of dietary vitamin A deficiency. Does not transport retinoic acid. This Rattus norvegicus (Rat) protein is Receptor for retinol uptake STRA6 (Stra6).